The following is a 229-amino-acid chain: MTFYQLSDAEGADNYYNPLLLWWYDFWVHWVSALFAWKCSSKNILLPFFLSNIGSRHCDVGVGTGYYLSAVRKRQPSWPQDKLTLVDFHIRCLRKAANRVGIADRTECVLANILEPIPIQPERQFDSISLMYVLHCLPGASKDKGRVFANLKPLLKDSGTLFGSTLLCRGVRQNWFNWLLQRIYNAVDMFQNRADFPDDFVRALEEEFEEVESVIIGTVLMFKARKPRR.

Belongs to the methyltransferase superfamily.

It functions in the pathway mycotoxin biosynthesis. Its function is as follows. Methyltransferase; part of the gene cluster that mediates the biosynthesis of citreoviridin, an inhibitor of the of F1-ATPase beta-subunit. The HR-PKS ctvA accepts acetyl-CoA as the starter unit and catalyzes eight iterations of malonyl-CoA extension and four iterations of SAM-dependent methylation at C4, C12, C14, and C16. The KR and DH domains selectively act on the first six iterations to generate the hexaene chain. In the last three iterations, the KR and DH domains terminate their functions to yield a beta,delta-diketo ester moiety, which then undergoes intramolecular cyclization to yield an alpha-pyrone intermediate. Subsequently, ctvB methylates the alpha-pyrone hydroxyl group to generate citreomontanin. In order to form the tetrahydrofuran ring with the correct stereochemistry, the terminal alkenes of citreomontanin need to undergo isomerization to yield a (17Z)-hexaene, a step that could be catalyzed by ctvC. The (17Z)-hexaene then undergoes bisepoxidation by ctvC to form a (17R,16R,15S,14R)-bisepoxide moiety. Lastly, ctvD acts as a regioselective hydrolase to form the tetrahydrofuran ring with the substituents in the correct absolute configuration, completing the biosynthesis of citreoviridin. This chain is Methyltransferase ctvB, found in Aspergillus terreus (strain NIH 2624 / FGSC A1156).